A 274-amino-acid polypeptide reads, in one-letter code: Dermonecrotic toxin LarSicTox-alphaIB2bii (274 aa).

His-3 is a catalytic residue. Residues Glu-23 and Asp-25 each contribute to the Mg(2+) site. Residue His-39 is the Nucleophile of the active site. Cystine bridges form between Cys-43–Cys-49 and Cys-45–Cys-188. Asp-83 is a Mg(2+) binding site. The N-linked (GlcNAc...) asparagine glycan is linked to Asn-251.

The protein belongs to the arthropod phospholipase D family. Class II subfamily. Requires Mg(2+) as cofactor. As to expression, expressed by the venom gland.

The protein localises to the secreted. It carries out the reaction an N-(acyl)-sphingosylphosphocholine = an N-(acyl)-sphingosyl-1,3-cyclic phosphate + choline. The catalysed reaction is an N-(acyl)-sphingosylphosphoethanolamine = an N-(acyl)-sphingosyl-1,3-cyclic phosphate + ethanolamine. It catalyses the reaction a 1-acyl-sn-glycero-3-phosphocholine = a 1-acyl-sn-glycero-2,3-cyclic phosphate + choline. The enzyme catalyses a 1-acyl-sn-glycero-3-phosphoethanolamine = a 1-acyl-sn-glycero-2,3-cyclic phosphate + ethanolamine. Its function is as follows. Dermonecrotic toxins cleave the phosphodiester linkage between the phosphate and headgroup of certain phospholipids (sphingolipid and lysolipid substrates), forming an alcohol (often choline) and a cyclic phosphate. This toxin acts on sphingomyelin (SM). It may also act on ceramide phosphoethanolamine (CPE), lysophosphatidylcholine (LPC) and lysophosphatidylethanolamine (LPE), but not on lysophosphatidylserine (LPS), and lysophosphatidylglycerol (LPG). It acts by transphosphatidylation, releasing exclusively cyclic phosphate products as second products. Induces dermonecrosis, hemolysis, increased vascular permeability, edema, inflammatory response, and platelet aggregation. This chain is Dermonecrotic toxin LarSicTox-alphaIB2bii, found in Loxosceles arizonica (Arizona brown spider).